We begin with the raw amino-acid sequence, 216 residues long: Pathogenicity-related ORF2 (216 aa).

Helical transmembrane passes span 6–26, 55–75, 157–177, and 193–213; these read VGSL…AAMV, LNGV…MEAF, IGFL…NALM, and FKLL…GLVL.

The protein belongs to the FliP/MopC/SpaP family.

The protein resides in the cell membrane. Functionally, important for pathogenicity. This chain is Pathogenicity-related ORF2, found in Xanthomonas campestris pv. glycines.